The chain runs to 643 residues: Zinc finger protein 64 (643 aa).

11 consecutive C2H2-type zinc fingers follow at residues 173 to 195 (HKCE…MRCH), 201 to 223 (YKCK…LRIH), 229 to 251 (FKCQ…LRSH), 297 to 322 (FNCR…LRIH), 328 to 350 (HKCE…MRCH), 356 to 378 (HKCH…LRIH), 384 to 406 (YKCQ…LRSH), 412 to 434 (FQCW…MIVH), 440 to 463 (FKCE…RIKH), 465 to 487 (FKCL…SRLH), and 493 to 515 (EKCP…SRVH). 8 residues coordinate Zn(2+): cysteine 495, cysteine 498, histidine 511, histidine 515, cysteine 523, cysteine 526, histidine 539, and histidine 544. Residues 538–552 (KHIDKVHREGAKTEN) are compositionally biased toward basic and acidic residues. A disordered region spans residues 538–571 (KHIDKVHREGAKTENRAPPGKDGPGESGPHHVPN). A C2H2-type 12 zinc finger spans residues 578 to 600 (FGCDKCGASFVRDDSLRCHRKQH).

The protein belongs to the krueppel C2H2-type zinc-finger protein family. As to quaternary structure, interacts with NOTCH1. As to expression, widely expressed. Expressed in the brain, spleen, liver, and heart.

It localises to the nucleus. In terms of biological role, may be involved in the regulation of mesenchymal cell differentiation through transactivation of NOTCH1 target genes. The chain is Zinc finger protein 64 from Mus musculus (Mouse).